Reading from the N-terminus, the 102-residue chain is Small ribosomal subunit protein uS10 (102 aa).

Belongs to the universal ribosomal protein uS10 family. In terms of assembly, part of the 30S ribosomal subunit.

In terms of biological role, involved in the binding of tRNA to the ribosomes. In Thermotoga neapolitana (strain ATCC 49049 / DSM 4359 / NBRC 107923 / NS-E), this protein is Small ribosomal subunit protein uS10.